An 891-amino-acid chain; its full sequence is Aconitate hydratase A (891 aa).

3 residues coordinate [4Fe-4S] cluster: Cys-435, Cys-501, and Cys-504.

The protein belongs to the aconitase/IPM isomerase family. As to quaternary structure, monomer. Requires [4Fe-4S] cluster as cofactor.

The catalysed reaction is citrate = D-threo-isocitrate. It carries out the reaction (2S,3R)-3-hydroxybutane-1,2,3-tricarboxylate = 2-methyl-cis-aconitate + H2O. It participates in carbohydrate metabolism; tricarboxylic acid cycle; isocitrate from oxaloacetate: step 2/2. The protein operates within organic acid metabolism; propanoate degradation. Involved in the catabolism of short chain fatty acids (SCFA) via the tricarboxylic acid (TCA)(acetyl degradation route) and probably the 2-methylcitrate cycle I (propionate degradation route). Catalyzes the reversible isomerization of citrate to isocitrate via cis-aconitate. The apo form of AcnA functions as a RNA-binding regulatory protein. Could catalyze the hydration of 2-methyl-cis-aconitate to yield (2R,3S)-2-methylisocitrate. The sequence is that of Aconitate hydratase A (acn) from Legionella pneumophila subsp. pneumophila (strain Philadelphia 1 / ATCC 33152 / DSM 7513).